The sequence spans 597 residues: Elongation factor 4 (597 aa).

The 183-residue stretch at 2 to 184 (QHIRNFSIIA…AIVARVPSPE (183 aa)) folds into the tr-type G domain. Residues 14–19 (DHGKST) and 131–134 (NKMD) each bind GTP.

It belongs to the TRAFAC class translation factor GTPase superfamily. Classic translation factor GTPase family. LepA subfamily.

It localises to the cell inner membrane. It catalyses the reaction GTP + H2O = GDP + phosphate + H(+). Its function is as follows. Required for accurate and efficient protein synthesis under certain stress conditions. May act as a fidelity factor of the translation reaction, by catalyzing a one-codon backward translocation of tRNAs on improperly translocated ribosomes. Back-translocation proceeds from a post-translocation (POST) complex to a pre-translocation (PRE) complex, thus giving elongation factor G a second chance to translocate the tRNAs correctly. Binds to ribosomes in a GTP-dependent manner. The polypeptide is Elongation factor 4 (Bordetella avium (strain 197N)).